A 932-amino-acid chain; its full sequence is Isoleucine--tRNA ligase (932 aa).

The short motif at 57–67 (PYANGDIHIGT) is the 'HIGH' region element. L-isoleucyl-5'-AMP is bound at residue Glu-559. The 'KMSKS' region motif lies at 600–604 (KMSKS). ATP is bound at residue Lys-603. Zn(2+) is bound by residues Cys-899, Cys-902, Cys-919, and Cys-922.

This sequence belongs to the class-I aminoacyl-tRNA synthetase family. IleS type 1 subfamily. In terms of assembly, monomer. Zn(2+) is required as a cofactor.

It is found in the cytoplasm. It catalyses the reaction tRNA(Ile) + L-isoleucine + ATP = L-isoleucyl-tRNA(Ile) + AMP + diphosphate. Catalyzes the attachment of isoleucine to tRNA(Ile). As IleRS can inadvertently accommodate and process structurally similar amino acids such as valine, to avoid such errors it has two additional distinct tRNA(Ile)-dependent editing activities. One activity is designated as 'pretransfer' editing and involves the hydrolysis of activated Val-AMP. The other activity is designated 'posttransfer' editing and involves deacylation of mischarged Val-tRNA(Ile). This is Isoleucine--tRNA ligase from Caldanaerobacter subterraneus subsp. tengcongensis (strain DSM 15242 / JCM 11007 / NBRC 100824 / MB4) (Thermoanaerobacter tengcongensis).